The primary structure comprises 197 residues: uncharacterized protein (197 aa).

A signal peptide spans 1-23 (MSARAPKELRLALPPCLLNRTFA). The Extracellular segment spans residues 24–61 (SPNASGSGNTGARGPGAVGSGTCITQVGQQLFQSFSST). A glycan (N-linked (GlcNAc...) asparagine) is linked at Asn-26. The chain crosses the membrane as a helical span at residues 62–82 (LVLIVLVTLIFCLIVLSLSTF). The Cytoplasmic portion of the chain corresponds to 83–197 (HIHKRRMKKR…EGLLQTVVLS (115 aa)). The disordered stretch occupies residues 94–180 (MQRAQEEYER…SSPQGAHAAS (87 aa)). Composition is skewed to basic and acidic residues over residues 96 to 107 (RAQEEYERDHCS) and 125 to 136 (HAKETRLERQPR). Residues 141-161 (CAPSNASSLSSSSPGLPCQGP) are compositionally biased toward low complexity. Residues 162–171 (CAPPPPPPAS) show a composition bias toward pro residues.

It is found in the membrane. This is an uncharacterized protein from Homo sapiens (Human).